A 100-amino-acid chain; its full sequence is Aspartyl/glutamyl-tRNA(Asn/Gln) amidotransferase subunit C (100 aa).

This sequence belongs to the GatC family. Heterotrimer of A, B and C subunits.

It carries out the reaction L-glutamyl-tRNA(Gln) + L-glutamine + ATP + H2O = L-glutaminyl-tRNA(Gln) + L-glutamate + ADP + phosphate + H(+). It catalyses the reaction L-aspartyl-tRNA(Asn) + L-glutamine + ATP + H2O = L-asparaginyl-tRNA(Asn) + L-glutamate + ADP + phosphate + 2 H(+). In terms of biological role, allows the formation of correctly charged Asn-tRNA(Asn) or Gln-tRNA(Gln) through the transamidation of misacylated Asp-tRNA(Asn) or Glu-tRNA(Gln) in organisms which lack either or both of asparaginyl-tRNA or glutaminyl-tRNA synthetases. The reaction takes place in the presence of glutamine and ATP through an activated phospho-Asp-tRNA(Asn) or phospho-Glu-tRNA(Gln). The sequence is that of Aspartyl/glutamyl-tRNA(Asn/Gln) amidotransferase subunit C from Rickettsia bellii (strain OSU 85-389).